The following is a 229-amino-acid chain: PKHD-type hydroxylase OCAR_6723/OCA5_c13470 (229 aa).

Positions 78–180 (HIFPPLFNRY…RVASFFWLQS (103 aa)) constitute a Fe2OG dioxygenase domain. Fe cation contacts are provided by histidine 98, aspartate 100, and histidine 161. Position 171 (arginine 171) interacts with 2-oxoglutarate.

Fe(2+) serves as cofactor. It depends on L-ascorbate as a cofactor.

This chain is PKHD-type hydroxylase OCAR_6723/OCA5_c13470, found in Afipia carboxidovorans (strain ATCC 49405 / DSM 1227 / KCTC 32145 / OM5) (Oligotropha carboxidovorans).